Reading from the N-terminus, the 346-residue chain is Probable electron transfer flavoprotein subunit alpha, mitochondrial (346 aa).

FAD is bound at residue 285–313 (LYVAIGISGAIQHLAGMKESKMIIAINKD).

Belongs to the ETF alpha-subunit/FixB family. Heterodimer of an alpha and a beta subunit. The cofactor is FAD.

Its subcellular location is the mitochondrion matrix. Functionally, the electron transfer flavoprotein serves as a specific electron acceptor for several dehydrogenases, including five acyl-CoA dehydrogenases, glutaryl-CoA and sarcosine dehydrogenase. It transfers the electrons to the main mitochondrial respiratory chain via ETF-ubiquinone oxidoreductase (ETF dehydrogenase). The sequence is that of Probable electron transfer flavoprotein subunit alpha, mitochondrial (ETF1) from Cryptococcus neoformans var. neoformans serotype D (strain B-3501A) (Filobasidiella neoformans).